Reading from the N-terminus, the 82-residue chain is Diptericin-A (82 aa).

Disordered regions lie at residues 1–32 (DEKP…DGFG) and 45–69 (DNGG…GNSR). Phe-82 is subject to Phenylalanine amide.

Belongs to the attacin/sarcotoxin-2 family.

The protein resides in the secreted. Functionally, antimicrobial peptide required to resist Gram-negative bacterial infections, regulated by Dredd. The protein is Diptericin-A of Protophormia terraenovae (Northern blowfly).